The following is a 125-amino-acid chain: Ribosome-binding factor A (125 aa).

Belongs to the RbfA family. As to quaternary structure, monomer. Binds 30S ribosomal subunits, but not 50S ribosomal subunits or 70S ribosomes.

The protein localises to the cytoplasm. Its function is as follows. One of several proteins that assist in the late maturation steps of the functional core of the 30S ribosomal subunit. Associates with free 30S ribosomal subunits (but not with 30S subunits that are part of 70S ribosomes or polysomes). Required for efficient processing of 16S rRNA. May interact with the 5'-terminal helix region of 16S rRNA. In Kosmotoga olearia (strain ATCC BAA-1733 / DSM 21960 / TBF 19.5.1), this protein is Ribosome-binding factor A.